We begin with the raw amino-acid sequence, 816 residues long: Neuronal PAS domain-containing protein 2 (816 aa).

Over residues 1 to 10 the composition is skewed to basic and acidic residues; the sequence is MDEDEKDRAK. The segment at 1–21 is disordered; sequence MDEDEKDRAKRASRNKSEKKR. Residues 1–61 form a sufficient for heterodimer formation with BMAL1, E-box binding and for the effect of NADPH region; the sequence is MDEDEKDRAK…VIGFLQKHNE (61 aa). Residues 9-59 form the bHLH domain; that stretch reads AKRASRNKSEKKRRDQFNVLIKELSSMLPGNTRKMDKTTVLEKVIGFLQKH. Positions 82–152 constitute a PAS 1 domain; sequence NEEFTQLMLE…KILSSHMLVT (71 aa). Heme b is bound by residues histidine 119 and histidine 171. The region spanning 237–307 is the PAS 2 domain; that stretch reads FLKEMCVADE…RCHQHLMQFG (71 aa). A PAC domain is found at 311 to 354; sequence SCCYRFLTKGQQWIWLQTHYYITYHQWNSKPEFIVCTHSVVSYA. 4 disordered regions span residues 364–431, 610–639, 685–705, and 742–816; these read LALE…STPT, ISAQ…SQFS, QPMM…RTGR, and PSFP…LSES. Low complexity predominate over residues 400–413; it reads SGLPSSPSPSASSR. Positions 420 to 431 are enriched in polar residues; sequence HTAMSEPTSTPT. Residues 623 to 639 show a composition bias toward low complexity; sequence LLPASGRSLSSLPSQFS. The segment covering 745–759 has biased composition (low complexity); sequence PASRPSPLQPAQAQQ. The span at 780–789 shows a compositional bias: polar residues; the sequence is LLSTFSQQPG. Basic residues predominate over residues 806–816; the sequence is PSRRVSRLSES.

In terms of assembly, component of the circadian clock oscillator which includes the CRY proteins, CLOCK or NPAS2, BMAL1 or BMAL2, CSNK1D and/or CSNK1E, TIMELESS and the PER proteins. Efficient DNA binding requires dimerization with another bHLH protein. Interacts with NCOA3, KAT2B and CREBBP. Forms a heterodimer with BMAL1 and this heterodimerization is required for E-box-dependent transactivation. Interacts with EP300. Heme is required as a cofactor. Expressed in the retinal ganglion cells (at protein level). Expressed in the hypothalamic suprachiasmatic nuclei (SCN) of the brain. Also found in spinal cord, and to a lesser extent in colon, small intestine and uterus. Exhibits a diurnal variation in its expression in the brain.

It localises to the nucleus. With respect to regulation, carbon monoxide (CO) and the redox state of the cell can modulate the transcriptional activity of the NPAS2-BMAL1 heterodimer. NADH and NADPH enhance the DNA-binding activity of the heterodimer whereas CO binds the heme group in NPAS2 and inhibits the DNA-binding activity of the heterodimer. Transcriptional activator which forms a core component of the circadian clock. The circadian clock, an internal time-keeping system, regulates various physiological processes through the generation of approximately 24 hour circadian rhythms in gene expression, which are translated into rhythms in metabolism and behavior. It is derived from the Latin roots 'circa' (about) and 'diem' (day) and acts as an important regulator of a wide array of physiological functions including metabolism, sleep, body temperature, blood pressure, endocrine, immune, cardiovascular, and renal function. Consists of two major components: the central clock, residing in the suprachiasmatic nucleus (SCN) of the brain, and the peripheral clocks that are present in nearly every tissue and organ system. Both the central and peripheral clocks can be reset by environmental cues, also known as Zeitgebers (German for 'timegivers'). The predominant Zeitgeber for the central clock is light, which is sensed by retina and signals directly to the SCN. The central clock entrains the peripheral clocks through neuronal and hormonal signals, body temperature and feeding-related cues, aligning all clocks with the external light/dark cycle. Circadian rhythms allow an organism to achieve temporal homeostasis with its environment at the molecular level by regulating gene expression to create a peak of protein expression once every 24 hours to control when a particular physiological process is most active with respect to the solar day. Transcription and translation of core clock components (CLOCK, NPAS2, BMAL1, BMAL2, PER1, PER2, PER3, CRY1 and CRY2) plays a critical role in rhythm generation, whereas delays imposed by post-translational modifications (PTMs) are important for determining the period (tau) of the rhythms (tau refers to the period of a rhythm and is the length, in time, of one complete cycle). A diurnal rhythm is synchronized with the day/night cycle, while the ultradian and infradian rhythms have a period shorter and longer than 24 hours, respectively. Disruptions in the circadian rhythms contribute to the pathology of cardiovascular diseases, cancer, metabolic syndromes and aging. A transcription/translation feedback loop (TTFL) forms the core of the molecular circadian clock mechanism. Transcription factors, CLOCK or NPAS2 and BMAL1 or BMAL2, form the positive limb of the feedback loop, act in the form of a heterodimer and activate the transcription of core clock genes and clock-controlled genes (involved in key metabolic processes), harboring E-box elements (5'-CACGTG-3') within their promoters. The core clock genes: PER1/2/3 and CRY1/2 which are transcriptional repressors form the negative limb of the feedback loop and interact with the CLOCK|NPAS2-BMAL1|BMAL2 heterodimer inhibiting its activity and thereby negatively regulating their own expression. This heterodimer also activates nuclear receptors NR1D1/2 and RORA/B/G, which form a second feedback loop and which activate and repress BMAL1 transcription, respectively. The NPAS2-BMAL1 heterodimer positively regulates the expression of MAOA, F7 and LDHA and modulates the circadian rhythm of daytime contrast sensitivity by regulating the rhythmic expression of adenylate cyclase type 1 (ADCY1) in the retina. NPAS2 plays an important role in sleep homeostasis and in maintaining circadian behaviors in normal light/dark and feeding conditions and in the effective synchronization of feeding behavior with scheduled food availability. Regulates the gene transcription of key metabolic pathways in the liver and is involved in DNA damage response by regulating several cell cycle and DNA repair genes. Controls the circadian rhythm of NR0B2 expression by binding rhythmically to its promoter. Mediates the diurnal variation in the expression of GABARA1 receptor in the brain and contributes to the regulation of anxiety-like behaviors and GABAergic neurotransmission in the ventral striatum. In Mus musculus (Mouse), this protein is Neuronal PAS domain-containing protein 2 (Npas2).